Here is a 160-residue protein sequence, read N- to C-terminus: ATP synthase subunit b (160 aa).

Residues 15–35 (LAIVIGVLFWFLRGFLGGILE) traverse the membrane as a helical segment.

It belongs to the ATPase B chain family. In terms of assembly, F-type ATPases have 2 components, F(1) - the catalytic core - and F(0) - the membrane proton channel. F(1) has five subunits: alpha(3), beta(3), gamma(1), delta(1), epsilon(1). F(0) has four main subunits: a(1), b(1), b'(1) and c(10-14). The alpha and beta chains form an alternating ring which encloses part of the gamma chain. F(1) is attached to F(0) by a central stalk formed by the gamma and epsilon chains, while a peripheral stalk is formed by the delta, b and b' chains.

The protein resides in the cellular thylakoid membrane. Its function is as follows. F(1)F(0) ATP synthase produces ATP from ADP in the presence of a proton or sodium gradient. F-type ATPases consist of two structural domains, F(1) containing the extramembraneous catalytic core and F(0) containing the membrane proton channel, linked together by a central stalk and a peripheral stalk. During catalysis, ATP synthesis in the catalytic domain of F(1) is coupled via a rotary mechanism of the central stalk subunits to proton translocation. Functionally, component of the F(0) channel, it forms part of the peripheral stalk, linking F(1) to F(0). The protein is ATP synthase subunit b of Synechococcus sp. (strain CC9902).